The following is a 76-amino-acid chain: Exodeoxyribonuclease 7 small subunit (76 aa).

The protein belongs to the XseB family. As to quaternary structure, heterooligomer composed of large and small subunits.

The protein resides in the cytoplasm. It carries out the reaction Exonucleolytic cleavage in either 5'- to 3'- or 3'- to 5'-direction to yield nucleoside 5'-phosphates.. Its function is as follows. Bidirectionally degrades single-stranded DNA into large acid-insoluble oligonucleotides, which are then degraded further into small acid-soluble oligonucleotides. The protein is Exodeoxyribonuclease 7 small subunit of Staphylococcus haemolyticus (strain JCSC1435).